Reading from the N-terminus, the 396-residue chain is Activity-regulated cytoskeleton-associated protein (396 aa).

Residues 54–78 adopt a coiled-coil conformation; sequence SKQVERELKGLHRSVGKLENNLDGY. Positions 89 to 100 are interaction with SH3GL1 or SH3GL3; the sequence is KSIKACLCRCQE. The tract at residues 195-214 is interaction with DNM2; the sequence is QSWVPGEDGQPSPGVDTQIF. S260 is modified (phosphoserine). Residues K268 and K269 each participate in a glycyl lysine isopeptide (Lys-Gly) (interchain with G-Cter in ubiquitin) cross-link. T278 is modified (phosphothreonine). Positions 358 to 396 are disordered; the sequence is GLEQAAEPSVTPLPTEDETEALTPALTSESVASDRTQPE. The span at 382-396 shows a compositional bias: polar residues; that stretch reads ALTSESVASDRTQPE.

This sequence belongs to the ARC/ARG3.1 family. Homooligomer; homooligomerizes into virion-like capsids. Interacts with SH3GL1/endophilin-2, SH3GL3/endophilin-3 and DNM2/DYN2. Interacts with CAMK2B (in the kinase inactive state); leading to target ARC to inactive synapses. Interacts with PSEN1. Interacts with GRIN2A and GRIN2B; inhibiting homooligomerization. Palmitoylation anchors the protein into the membrane by allowing direct insertion into the hydrophobic core of the lipid bilayer. In terms of processing, ubiquitinated by UBE3A, leading to its degradation by the proteasome, thereby promoting AMPA receptors (AMPARs) expression at synapses. Ubiquitinated by RNF216 at Lys-268 and Lys-269 limiting ARC protein levels induced by synaptic activity and thus regulating ARC-dependent forms of synaptic plasticity. Post-translationally, phosphorylation at Ser-260 by CaMK2 prevents homooligomerization into virion-like capsids by disrupting an interaction surface essential for high-order oligomerization. Phosphorylation by CaMK2 inhibits synaptic activity. Expressed exclusively in certain parts of the brain including cortex and molecular layer of the hippocampus. Typically expressed at high level in a minority of neurons. Basal expression higher in cortex than in hippocampus, highest in visual cortex.

It is found in the extracellular vesicle membrane. The protein localises to the postsynaptic cell membrane. Its subcellular location is the synapse. The protein resides in the postsynaptic density. It localises to the early endosome membrane. It is found in the cell projection. The protein localises to the dendrite. Its subcellular location is the cytoplasm. The protein resides in the cytoskeleton. It localises to the cell cortex. It is found in the dendritic spine. The protein localises to the cytoplasmic vesicle. Its subcellular location is the secretory vesicle. The protein resides in the acrosome. It localises to the clathrin-coated vesicle membrane. Functionally, master regulator of synaptic plasticity that self-assembles into virion-like capsids that encapsulate RNAs and mediate intercellular RNA transfer in the nervous system. ARC protein is released from neurons in extracellular vesicles that mediate the transfer of ARC mRNA into new target cells, where ARC mRNA can undergo activity-dependent translation. ARC capsids are endocytosed and are able to transfer ARC mRNA into the cytoplasm of neurons. Acts as a key regulator of synaptic plasticity: required for protein synthesis-dependent forms of long-term potentiation (LTP) and depression (LTD) and for the formation of long-term memory. Regulates synaptic plasticity by promoting endocytosis of AMPA receptors (AMPARs) in response to synaptic activity: this endocytic pathway maintains levels of surface AMPARs in response to chronic changes in neuronal activity through synaptic scaling, thereby contributing to neuronal homeostasis. Acts as a postsynaptic mediator of activity-dependent synapse elimination in the developing cerebellum by mediating elimination of surplus climbing fiber synapses. Accumulates at weaker synapses, probably to prevent their undesired enhancement. This suggests that ARC-containing virion-like capsids may be required to eliminate synaptic material. Required to transduce experience into long-lasting changes in visual cortex plasticity and for long-term memory. Involved in postsynaptic trafficking and processing of amyloid-beta A4 (APP) via interaction with PSEN1. In addition to its role in synapses, also involved in the regulation of the immune system: specifically expressed in skin-migratory dendritic cells and regulates fast dendritic cell migration, thereby regulating T-cell activation. This Rattus norvegicus (Rat) protein is Activity-regulated cytoskeleton-associated protein.